The sequence spans 601 residues: Elongation factor 4 (601 aa).

The 183-residue stretch at 7-189 (SLIRNFSIIA…ALVTRLPPPV (183 aa)) folds into the tr-type G domain. GTP contacts are provided by residues 19-24 (DHGKST) and 136-139 (NKVD).

The protein belongs to the TRAFAC class translation factor GTPase superfamily. Classic translation factor GTPase family. LepA subfamily.

It is found in the cell inner membrane. The catalysed reaction is GTP + H2O = GDP + phosphate + H(+). In terms of biological role, required for accurate and efficient protein synthesis under certain stress conditions. May act as a fidelity factor of the translation reaction, by catalyzing a one-codon backward translocation of tRNAs on improperly translocated ribosomes. Back-translocation proceeds from a post-translocation (POST) complex to a pre-translocation (PRE) complex, thus giving elongation factor G a second chance to translocate the tRNAs correctly. Binds to ribosomes in a GTP-dependent manner. This is Elongation factor 4 from Gluconacetobacter diazotrophicus (strain ATCC 49037 / DSM 5601 / CCUG 37298 / CIP 103539 / LMG 7603 / PAl5).